Consider the following 204-residue polypeptide: FMN-dependent NADH:quinone oxidoreductase (204 aa).

FMN contacts are provided by residues Ser9, 15–17, 95–98, and 139–142; these read SVS, MYNF, and SRGG.

It belongs to the azoreductase type 1 family. Homodimer. FMN serves as cofactor.

The catalysed reaction is 2 a quinone + NADH + H(+) = 2 a 1,4-benzosemiquinone + NAD(+). It catalyses the reaction N,N-dimethyl-1,4-phenylenediamine + anthranilate + 2 NAD(+) = 2-(4-dimethylaminophenyl)diazenylbenzoate + 2 NADH + 2 H(+). Functionally, quinone reductase that provides resistance to thiol-specific stress caused by electrophilic quinones. In terms of biological role, also exhibits azoreductase activity. Catalyzes the reductive cleavage of the azo bond in aromatic azo compounds to the corresponding amines. This is FMN-dependent NADH:quinone oxidoreductase from Methylocella silvestris (strain DSM 15510 / CIP 108128 / LMG 27833 / NCIMB 13906 / BL2).